Consider the following 2150-residue polypeptide: Genome polyprotein (2150 aa).

G2 carries N-myristoyl glycine; by host lipidation. The Cytoplasmic portion of the chain corresponds to 2–1463; sequence GAQVSRQNVG…ELNLANTIIT (1462 aa). The interval 565–581 is amphipathic alpha-helix; it reads IAQNPVENYIDEVLNEV. The segment at 592-611 is disordered; that stretch reads PTTSNSAPALDAAETGHTSS. Residues H868 and D885 each act as for protease 2A activity in the active site. Positions 902 and 904 each coordinate Zn(2+). Catalysis depends on C956, which acts as the For protease 2A activity. Zn(2+) is bound by residues C962 and H964. Residues 1088 to 1157 form a membrane-binding region; that stretch reads SDSWLKKFTE…SLRVADMKTQ (70 aa). The tract at residues 1088–1221 is oligomerization; that stretch reads SDSWLKKFTE…PPGAGKSITT (134 aa). An RNA-binding region spans residues 1109 to 1113; sequence GNKIS. One can recognise an SF3 helicase domain in the interval 1181–1343; the sequence is EAKRIKTLYI…FKDPQGKLNV (163 aa). Residues C1350, C1361, and C1366 each coordinate Zn(2+). Residues 1350–1366 form a C4-type; degenerate zinc finger; the sequence is CDVDNRIGNARCCPFVC. The segment at 1393-1400 is RNA-binding; the sequence is EDRRRRQV. The segment at 1404–1409 is oligomerization; that stretch reads MTAIFQ. An intramembrane segment occupies 1464-1479; that stretch reads IIANVIGMARIIYVIY. Topologically, residues 1480–2150 are cytoplasmic; the sequence is KLFCTLQGPY…LLLHEWYEKF (671 aa). O-(5'-phospho-RNA)-tyrosine is present on Y1489. Positions 1508 to 1686 constitute a Peptidase C3 domain; it reads GPEEEFGMSL…FSAMLLRSYF (179 aa). Residues H1547, E1578, and C1654 each act as for protease 3C activity in the active site. The RdRp catalytic domain occupies 1918–2031; sequence KCIMAFDYTN…SYIHELDMEA (114 aa). Mg(2+)-binding residues include D1924 and D2017.

It belongs to the picornaviruses polyprotein family. Interacts with capsid protein VP1 and capsid protein VP3 to form heterotrimeric protomers. In terms of assembly, interacts with capsid protein VP0, and capsid protein VP3 to form heterotrimeric protomers. Five protomers subsequently associate to form pentamers which serve as building blocks for the capsid. Interacts with capsid protein VP2, capsid protein VP3 and capsid protein VP4 following cleavage of capsid protein VP0. As to quaternary structure, interacts with capsid protein VP1 and capsid protein VP3 in the mature capsid. Interacts with capsid protein VP0 and capsid protein VP1 to form heterotrimeric protomers. Five protomers subsequently associate to form pentamers which serve as building blocks for the capsid. Interacts with capsid protein VP4 in the mature capsid. Interacts with protein 2C; this interaction may be important for virion morphogenesis. In terms of assembly, interacts with capsid protein VP1 and capsid protein VP3. As to quaternary structure, homodimer. Homohexamer; forms a hexameric ring structure with 6-fold symmetry characteristic of AAA+ ATPases. Interacts (via N-terminus) with host RTN3 (via reticulon domain); this interaction is important for viral replication. Interacts with capsid protein VP3; this interaction may be important for virion morphogenesis. In terms of assembly, interacts with protein 3CD. As to quaternary structure, homodimer. Interacts with host GBF1. Interacts (via GOLD domain) with host ACBD3 (via GOLD domain); this interaction allows the formation of a viral protein 3A/ACBD3 heterotetramer with a 2:2 stoichiometry, which will stimulate the recruitment of host PI4KB in order to synthesize PI4P at the viral RNA replication sites. Interacts with RNA-directed RNA polymerase. In terms of assembly, interacts with protein 3AB and with RNA-directed RNA polymerase. As to quaternary structure, interacts with Viral protein genome-linked and with protein 3CD. The cofactor is Mg(2+). Post-translationally, specific enzymatic cleavages in vivo by the viral proteases yield processing intermediates and the mature proteins. In terms of processing, myristoylation is required for the formation of pentamers during virus assembly. Further assembly of 12 pentamers and a molecule of genomic RNA generates the provirion. During virion maturation, immature virions are rendered infectious following cleavage of VP0 into VP4 and VP2. This maturation seems to be an autocatalytic event triggered by the presence of RNA in the capsid and it is followed by a conformational change infectious virion. Post-translationally, myristoylation is required during RNA encapsidation and formation of the mature virus particle. In terms of processing, VPg is uridylylated by the polymerase into VPg-pUpU. This acts as a nucleotide-peptide primer for the genomic RNA replication.

The protein resides in the virion. The protein localises to the host cytoplasm. It is found in the host cytoplasmic vesicle membrane. It localises to the host nucleus. It catalyses the reaction a ribonucleoside 5'-triphosphate + H2O = a ribonucleoside 5'-diphosphate + phosphate + H(+). The catalysed reaction is Selective cleavage of Tyr-|-Gly bond in the picornavirus polyprotein.. It carries out the reaction RNA(n) + a ribonucleoside 5'-triphosphate = RNA(n+1) + diphosphate. The enzyme catalyses Selective cleavage of Gln-|-Gly bond in the poliovirus polyprotein. In other picornavirus reactions Glu may be substituted for Gln, and Ser or Thr for Gly.. Its activity is regulated as follows. Replication or transcription is subject to high level of random mutations by the nucleotide analog ribavirin. In terms of biological role, forms an icosahedral capsid of pseudo T=3 symmetry with capsid proteins VP2 and VP3. The capsid is 300 Angstroms in diameter, composed of 60 copies of each capsid protein and enclosing the viral positive strand RNA genome. Capsid protein VP1 mainly forms the vertices of the capsid. Capsid protein VP1 interacts with host cell receptor to provide virion attachment to target host cells. This attachment induces virion internalization. Tyrosine kinases are probably involved in the entry process. After binding to its receptor, the capsid undergoes conformational changes. Capsid protein VP1 N-terminus (that contains an amphipathic alpha-helix) and capsid protein VP4 are externalized. Together, they shape a pore in the host membrane through which viral genome is translocated to host cell cytoplasm. Functionally, forms an icosahedral capsid of pseudo T=3 symmetry with capsid proteins VP2 and VP3. The capsid is 300 Angstroms in diameter, composed of 60 copies of each capsid protein and enclosing the viral positive strand RNA genome. Its function is as follows. Lies on the inner surface of the capsid shell. After binding to the host receptor, the capsid undergoes conformational changes. Capsid protein VP4 is released, Capsid protein VP1 N-terminus is externalized, and together, they shape a pore in the host membrane through which the viral genome is translocated into the host cell cytoplasm. Component of immature procapsids, which is cleaved into capsid proteins VP4 and VP2 after maturation. Allows the capsid to remain inactive before the maturation step. In terms of biological role, cysteine protease that cleaves viral polyprotein and specific host proteins. It is responsible for the autocatalytic cleavage between the P1 and P2 regions, which is the first cleavage occurring in the polyprotein. Also cleaves the host translation initiation factor EIF4G1, in order to shut down the capped cellular mRNA translation. Inhibits the host nucleus-cytoplasm protein and RNA trafficking by cleaving host members of the nuclear pores. Counteracts stress granule formation probably by antagonizing its assembly or promoting its dissassembly. Functionally, plays an essential role in the virus replication cycle by acting as a viroporin. Creates a pore in the host endoplasmic reticulum and as a consequence releases Ca2+ in the cytoplasm of infected cell. In turn, high levels of cytoplasmic calcium may trigger membrane trafficking and transport of viral ER-associated proteins to viroplasms, sites of viral genome replication. Its function is as follows. Induces and associates with structural rearrangements of intracellular membranes. Displays RNA-binding, nucleotide binding and NTPase activities. May play a role in virion morphogenesis and viral RNA encapsidation by interacting with the capsid protein VP3. Localizes the viral replication complex to the surface of membranous vesicles. Together with protein 3CD binds the Cis-Active RNA Element (CRE) which is involved in RNA synthesis initiation. Acts as a cofactor to stimulate the activity of 3D polymerase, maybe through a nucleid acid chaperone activity. In terms of biological role, localizes the viral replication complex to the surface of membranous vesicles. It inhibits host cell endoplasmic reticulum-to-Golgi apparatus transport and causes the disassembly of the Golgi complex, possibly through GBF1 interaction. This would result in depletion of MHC, trail receptors and IFN receptors at the host cell surface. Plays an essential role in viral RNA replication by recruiting ACBD3 and PI4KB at the viral replication sites, thereby allowing the formation of the rearranged membranous structures where viral replication takes place. Functionally, acts as a primer for viral RNA replication and remains covalently bound to viral genomic RNA. VPg is uridylylated prior to priming replication into VPg-pUpU. The oriI viral genomic sequence may act as a template for this. The VPg-pUpU is then used as primer on the genomic RNA poly(A) by the RNA-dependent RNA polymerase to replicate the viral genome. During genome replication, the VPg-RNA linkage is removed by the host TDP2, thereby accelerating replication. During the late stage of the replication cycle, host TDP2 is excluded from sites of viral RNA synthesis and encapsidation, allowing for the generation of progeny virions. Its function is as follows. Involved in the viral replication complex and viral polypeptide maturation. It exhibits protease activity with a specificity and catalytic efficiency that is different from protease 3C. Protein 3CD lacks polymerase activity. Protein 3CD binds to the 5'UTR of the viral genome. Replicates the viral genomic RNA on the surface of intracellular membranes. May form linear arrays of subunits that propagate along a strong head-to-tail interaction called interface-I. Covalently attaches UMP to a tyrosine of VPg, which is used to prime RNA synthesis. The positive stranded RNA genome is first replicated at virus induced membranous vesicles, creating a dsRNA genomic replication form. This dsRNA is then used as template to synthesize positive stranded RNA genomes. ss(+)RNA genomes are either translated, replicated or encapsidated. In terms of biological role, major viral protease that mediates proteolytic processing of the polyprotein. Cleaves host EIF5B, contributing to host translation shutoff. Also cleaves host PABPC1, contributing to host translation shutoff. Cleaves host NLRP1, triggers host N-glycine-mediated degradation of the autoinhibitory NLRP1 N-terminal fragment. This Homo sapiens (Human) protein is Genome polyprotein.